The chain runs to 169 residues: MITIGKIGKPYGILGWFHMFSYTEKKNNIFNYFPWKLEKSNILLYKNNIIHYKTHTDHFLIKIKDINNRTQTLNFIKQNILIKNFQLPKLKNKEYYWNDIFSCYIFDLKKKKIGSIKNIIDNKFYCTLEILYKKKKIYIPFIQPNFIKKIDIKKKIIVIDLTNLNNQLI.

In terms of domain architecture, PRC barrel spans 92-166 (NKEYYWNDIF…IVIDLTNLNN (75 aa)).

This sequence belongs to the RimM family. In terms of assembly, binds ribosomal protein uS19.

Its subcellular location is the cytoplasm. Its function is as follows. An accessory protein needed during the final step in the assembly of 30S ribosomal subunit, possibly for assembly of the head region. Essential for efficient processing of 16S rRNA. May be needed both before and after RbfA during the maturation of 16S rRNA. It has affinity for free ribosomal 30S subunits but not for 70S ribosomes. This chain is Ribosome maturation factor RimM, found in Buchnera aphidicola subsp. Cinara cedri (strain Cc).